Reading from the N-terminus, the 402-residue chain is CCA-adding enzyme (402 aa).

The ATP site is built by Gly-32 and Arg-35. Positions 32 and 35 each coordinate CTP. 2 residues coordinate Mg(2+): Asp-45 and Asp-47. Arg-116, Asp-159, Arg-162, Arg-165, and Arg-168 together coordinate ATP. Arg-116, Asp-159, Arg-162, Arg-165, and Arg-168 together coordinate CTP.

It belongs to the tRNA nucleotidyltransferase/poly(A) polymerase family. Bacterial CCA-adding enzyme type 3 subfamily. In terms of assembly, homodimer. It depends on Mg(2+) as a cofactor.

The enzyme catalyses a tRNA precursor + 2 CTP + ATP = a tRNA with a 3' CCA end + 3 diphosphate. It catalyses the reaction a tRNA with a 3' CCA end + 2 CTP + ATP = a tRNA with a 3' CCACCA end + 3 diphosphate. Its function is as follows. Catalyzes the addition and repair of the essential 3'-terminal CCA sequence in tRNAs without using a nucleic acid template. Adds these three nucleotides in the order of C, C, and A to the tRNA nucleotide-73, using CTP and ATP as substrates and producing inorganic pyrophosphate. tRNA 3'-terminal CCA addition is required both for tRNA processing and repair. Also involved in tRNA surveillance by mediating tandem CCA addition to generate a CCACCA at the 3' terminus of unstable tRNAs. While stable tRNAs receive only 3'-terminal CCA, unstable tRNAs are marked with CCACCA and rapidly degraded. In Streptococcus pyogenes serotype M4 (strain MGAS10750), this protein is CCA-adding enzyme.